A 392-amino-acid chain; its full sequence is Methylthioribose-1-phosphate isomerase (392 aa).

D267 acts as the Proton donor in catalysis.

This sequence belongs to the eIF-2B alpha/beta/delta subunits family. MtnA subfamily.

It localises to the cytoplasm. The protein resides in the nucleus. It catalyses the reaction 5-(methylsulfanyl)-alpha-D-ribose 1-phosphate = 5-(methylsulfanyl)-D-ribulose 1-phosphate. It functions in the pathway amino-acid biosynthesis; L-methionine biosynthesis via salvage pathway; L-methionine from S-methyl-5-thio-alpha-D-ribose 1-phosphate: step 1/6. Catalyzes the interconversion of methylthioribose-1-phosphate (MTR-1-P) into methylthioribulose-1-phosphate (MTRu-1-P). The protein is Methylthioribose-1-phosphate isomerase of Ajellomyces dermatitidis (strain ER-3 / ATCC MYA-2586) (Blastomyces dermatitidis).